The chain runs to 491 residues: Cytochrome P450 2B2 (491 aa).

Ser128 bears the Phosphoserine; by PKA mark. Cys436 provides a ligand contact to heme.

The protein belongs to the cytochrome P450 family. The cofactor is heme. Post-translationally, phosphorylation is accompanied by a decrease in enzyme activity.

The protein localises to the endoplasmic reticulum membrane. It is found in the microsome membrane. The enzyme catalyses an organic molecule + reduced [NADPH--hemoprotein reductase] + O2 = an alcohol + oxidized [NADPH--hemoprotein reductase] + H2O + H(+). Functionally, cytochromes P450 are a group of heme-thiolate monooxygenases. In liver microsomes, this enzyme is involved in an NADPH-dependent electron transport pathway. It oxidizes a variety of structurally unrelated compounds, including steroids, fatty acids, and xenobiotics. The protein is Cytochrome P450 2B2 (Cyp2b2) of Rattus norvegicus (Rat).